The chain runs to 91 residues: Large ribosomal subunit protein bL27 (91 aa).

This sequence belongs to the bacterial ribosomal protein bL27 family.

The protein is Large ribosomal subunit protein bL27 of Chromobacterium violaceum (strain ATCC 12472 / DSM 30191 / JCM 1249 / CCUG 213 / NBRC 12614 / NCIMB 9131 / NCTC 9757 / MK).